We begin with the raw amino-acid sequence, 192 residues long: MRSATVHRQTRETDITVEISLDGKGNSTIDTGIGFLDHMLTSFAKHGLVDLMIKARGDLQVDDHHTVEDIGISLGEAYRDALKEKTGIERFGHALVPMDEALAVVAVDISGRGYSVFKADFRQPKIGDYSTAMTRHFIDSFARSAGITINVKIEGEDDHHMVEAMFKALGLALSMAAAKNERRGIPSTKGVL.

It belongs to the imidazoleglycerol-phosphate dehydratase family.

The protein resides in the cytoplasm. It carries out the reaction D-erythro-1-(imidazol-4-yl)glycerol 3-phosphate = 3-(imidazol-4-yl)-2-oxopropyl phosphate + H2O. It functions in the pathway amino-acid biosynthesis; L-histidine biosynthesis; L-histidine from 5-phospho-alpha-D-ribose 1-diphosphate: step 6/9. The polypeptide is Imidazoleglycerol-phosphate dehydratase (Methanocella arvoryzae (strain DSM 22066 / NBRC 105507 / MRE50)).